A 185-amino-acid chain; its full sequence is Ribosome-recycling factor (185 aa).

This sequence belongs to the RRF family.

It is found in the cytoplasm. Functionally, responsible for the release of ribosomes from messenger RNA at the termination of protein biosynthesis. May increase the efficiency of translation by recycling ribosomes from one round of translation to another. In Pseudothermotoga lettingae (strain ATCC BAA-301 / DSM 14385 / NBRC 107922 / TMO) (Thermotoga lettingae), this protein is Ribosome-recycling factor.